The primary structure comprises 261 residues: Gap junction beta-6 protein (261 aa).

Residues 1–22 lie on the Cytoplasmic side of the membrane; it reads MDWGTLHTFIGGVNKHSTSIGK. A helical transmembrane segment spans residues 23–45; it reads VWITVIFIFRVMILVVAAQEVWG. Residues 46–75 are Extracellular-facing; that stretch reads DEQEDFVCNTLQPGCKNVCYDHFFPVSHIR. A helical transmembrane segment spans residues 76 to 98; it reads LWALQLIFVSTPALLVAMHVAYY. Residues 99–131 are Cytoplasmic-facing; the sequence is RHETTRKFRRGEKRNDFKDIEDIKKQKVRIEGS. A helical transmembrane segment spans residues 132 to 154; the sequence is LWWTYTSSIFFRIIFEAAFMYVF. At 155–192 the chain is on the extracellular side; it reads YFLYNGYHLPWVLKCGIDPCPNLVDCFISRPTEKTVFT. A helical membrane pass occupies residues 193 to 215; the sequence is IFMISASVICMLLNVAELCYLLL. Over 216 to 261 the chain is Cytoplasmic; sequence KVCFRRSKRAQTQKNHPNHALKESKQNEMNELISDSGQNAITGFPS.

Belongs to the connexin family. Beta-type (group I) subfamily. A connexon is composed of a hexamer of connexins. Interacts with CNST.

The protein localises to the cell membrane. Its subcellular location is the cell junction. The protein resides in the gap junction. Functionally, one gap junction consists of a cluster of closely packed pairs of transmembrane channels, the connexons, through which materials of low MW diffuse from one cell to a neighboring cell. The polypeptide is Gap junction beta-6 protein (GJB6) (Homo sapiens (Human)).